We begin with the raw amino-acid sequence, 206 residues long: Small ribosomal subunit protein uS4 (206 aa).

Residues 96–158 enclose the S4 RNA-binding domain; it reads SRLDNVVYRM…AKKQLRIQNA (63 aa).

It belongs to the universal ribosomal protein uS4 family. As to quaternary structure, part of the 30S ribosomal subunit. Contacts protein S5. The interaction surface between S4 and S5 is involved in control of translational fidelity.

One of the primary rRNA binding proteins, it binds directly to 16S rRNA where it nucleates assembly of the body of the 30S subunit. In terms of biological role, with S5 and S12 plays an important role in translational accuracy. In Francisella tularensis subsp. mediasiatica (strain FSC147), this protein is Small ribosomal subunit protein uS4.